The chain runs to 305 residues: Sulfate adenylyltransferase subunit 2 (305 aa).

It belongs to the PAPS reductase family. CysD subfamily. As to quaternary structure, heterodimer composed of CysD, the smaller subunit, and CysN.

The catalysed reaction is sulfate + ATP + H(+) = adenosine 5'-phosphosulfate + diphosphate. It functions in the pathway sulfur metabolism; hydrogen sulfide biosynthesis; sulfite from sulfate: step 1/3. Functionally, with CysN forms the ATP sulfurylase (ATPS) that catalyzes the adenylation of sulfate producing adenosine 5'-phosphosulfate (APS) and diphosphate, the first enzymatic step in sulfur assimilation pathway. APS synthesis involves the formation of a high-energy phosphoric-sulfuric acid anhydride bond driven by GTP hydrolysis by CysN coupled to ATP hydrolysis by CysD. The polypeptide is Sulfate adenylyltransferase subunit 2 (Stutzerimonas stutzeri (strain A1501) (Pseudomonas stutzeri)).